The sequence spans 197 residues: Ribonuclease HII (197 aa).

An RNase H type-2 domain is found at 9–197 (KLIAGVDEVG…APVKKALEQF (189 aa)). A divalent metal cation-binding residues include D15, E16, and D107.

Belongs to the RNase HII family. Mn(2+) serves as cofactor. The cofactor is Mg(2+).

It localises to the cytoplasm. The enzyme catalyses Endonucleolytic cleavage to 5'-phosphomonoester.. Its function is as follows. Endonuclease that specifically degrades the RNA of RNA-DNA hybrids. The polypeptide is Ribonuclease HII (Haemophilus influenzae (strain PittEE)).